Consider the following 266-residue polypeptide: ATP synthase subunit a (266 aa).

Transmembrane regions (helical) follow at residues 28–48 (SINV…LVIF), 88–108 (LIAP…MMDL), 141–161 (DVNI…FYSI), 206–226 (LFGN…LLPW), and 237–257 (AIFH…LTVV).

The protein belongs to the ATPase A chain family. In terms of assembly, F-type ATPases have 2 components, CF(1) - the catalytic core - and CF(0) - the membrane proton channel. CF(1) has five subunits: alpha(3), beta(3), gamma(1), delta(1), epsilon(1). CF(0) has three main subunits: a(1), b(2) and c(9-12). The alpha and beta chains form an alternating ring which encloses part of the gamma chain. CF(1) is attached to CF(0) by a central stalk formed by the gamma and epsilon chains, while a peripheral stalk is formed by the delta and b chains.

It is found in the cell inner membrane. Key component of the proton channel; it plays a direct role in the translocation of protons across the membrane. The protein is ATP synthase subunit a of Pectobacterium atrosepticum (strain SCRI 1043 / ATCC BAA-672) (Erwinia carotovora subsp. atroseptica).